The chain runs to 138 residues: Large ribosomal subunit protein uL16 (138 aa).

This sequence belongs to the universal ribosomal protein uL16 family. As to quaternary structure, part of the 50S ribosomal subunit.

Binds 23S rRNA and is also seen to make contacts with the A and possibly P site tRNAs. This Ureaplasma urealyticum serovar 10 (strain ATCC 33699 / Western) protein is Large ribosomal subunit protein uL16.